The primary structure comprises 258 residues: UPF0246 protein YaaA (258 aa).

This sequence belongs to the UPF0246 family.

In Shigella sonnei (strain Ss046), this protein is UPF0246 protein YaaA.